Reading from the N-terminus, the 192-residue chain is Phosphoheptose isomerase (192 aa).

Residues 34 to 192 (VVDAYRAGNK…VERELFLKGN (159 aa)) form the SIS domain. Residue 49–51 (NGG) participates in substrate binding. Residues His58 and Glu62 each contribute to the Zn(2+) site. Substrate contacts are provided by residues Glu62, 91–92 (ND), 117–119 (STS), Ser122, and Gln169. Residues Gln169 and His177 each contribute to the Zn(2+) site.

The protein belongs to the SIS family. GmhA subfamily. In terms of assembly, homotetramer. Zn(2+) is required as a cofactor.

It is found in the cytoplasm. It carries out the reaction 2 D-sedoheptulose 7-phosphate = D-glycero-alpha-D-manno-heptose 7-phosphate + D-glycero-beta-D-manno-heptose 7-phosphate. It functions in the pathway carbohydrate biosynthesis; D-glycero-D-manno-heptose 7-phosphate biosynthesis; D-glycero-alpha-D-manno-heptose 7-phosphate and D-glycero-beta-D-manno-heptose 7-phosphate from sedoheptulose 7-phosphate: step 1/1. Catalyzes the isomerization of sedoheptulose 7-phosphate in D-glycero-D-manno-heptose 7-phosphate. The sequence is that of Phosphoheptose isomerase from Geobacter sp. (strain M21).